A 290-amino-acid chain; its full sequence is Aquaporin PIP2-1 (290 aa).

The interval 1–20 (MGKDDVIESGAGGGEFAAKD) is disordered. Transmembrane regions (helical) follow at residues 43 to 63 (AVIA…ATVI) and 80 to 100 (CGGV…FVLV). Positions 112-114 (NPA) match the NPA 1 motif. 3 helical membrane passes run 131–151 (LLYI…VKAF), 173–193 (GTGL…VFSA), and 205–225 (VPVL…LATI). An NPA 2 motif is present at residues 233–235 (NPA). The helical transmembrane segment at 255–275 (IFWVGPLVGAAIAAFYHQYIL) threads the bilayer.

It belongs to the MIP/aquaporin (TC 1.A.8) family. PIP (TC 1.A.8.11) subfamily. In terms of assembly, homomers. Can interact with PIP1-2 to form heteromers. Expressed in roots.

It localises to the cell membrane. Its function is as follows. Water channel required to facilitate the transport of water across cell membrane. Active as homomers. Increased activity when heteromerization with PIP1-2. This is Aquaporin PIP2-1 (PIP2-1) from Zea mays (Maize).